The sequence spans 647 residues: Probable cobalt/nickel-exporting P-type ATPase (647 aa).

Transmembrane regions (helical) follow at residues 33 to 53 (WAAAALALFLTGLAAQLLGAP), 55 to 75 (AVVWTLYLACYVVGGWEPAWV), 94 to 114 (AAIGAATIGQVFDGALLIVIF), 260 to 280 (AGVVVATLALLTVPLMFGADL), and 291 to 311 (MIVASPCAVVLATMPPLLSAI). Asp-339 (4-aspartylphosphate intermediate) is an active-site residue. Asp-532 and Asp-536 together coordinate Mg(2+). A helical membrane pass occupies residues 587-607 (VIANLVMAGAAITTLVLWDLF).

The protein belongs to the cation transport ATPase (P-type) (TC 3.A.3) family. Type IB subfamily.

The protein resides in the cell membrane. It carries out the reaction Ni(2+)(out) + ATP + H2O = Ni(2+)(in) + ADP + phosphate + H(+). It catalyses the reaction Co(2+)(out) + ATP + H2O = Co(2+)(in) + ADP + phosphate + H(+). Involved in heavy metal homeostasis. Probably exports nickel and cobalt ions out of the cell. This is Probable cobalt/nickel-exporting P-type ATPase (ctpD) from Mycolicibacterium smegmatis (strain ATCC 700084 / mc(2)155) (Mycobacterium smegmatis).